A 327-amino-acid polypeptide reads, in one-letter code: Undecaprenyl-phosphate 4-deoxy-4-formamido-L-arabinose transferase (327 aa).

2 consecutive transmembrane segments (helical) span residues 233 to 253 (ILSLIGSVVALSGFLLALLLI) and 268 to 288 (VFTLFAVLFMFIGAQFVGMGL).

Belongs to the glycosyltransferase 2 family.

It localises to the cell inner membrane. It catalyses the reaction UDP-4-deoxy-4-formamido-beta-L-arabinose + di-trans,octa-cis-undecaprenyl phosphate = 4-deoxy-4-formamido-alpha-L-arabinopyranosyl di-trans,octa-cis-undecaprenyl phosphate + UDP. It functions in the pathway glycolipid biosynthesis; 4-amino-4-deoxy-alpha-L-arabinose undecaprenyl phosphate biosynthesis; 4-amino-4-deoxy-alpha-L-arabinose undecaprenyl phosphate from UDP-4-deoxy-4-formamido-beta-L-arabinose and undecaprenyl phosphate: step 1/2. Its pathway is bacterial outer membrane biogenesis; lipopolysaccharide biosynthesis. Functionally, catalyzes the transfer of 4-deoxy-4-formamido-L-arabinose from UDP to undecaprenyl phosphate. The modified arabinose is attached to lipid A and is required for resistance to polymyxin and cationic antimicrobial peptides. This chain is Undecaprenyl-phosphate 4-deoxy-4-formamido-L-arabinose transferase, found in Pectobacterium atrosepticum (strain SCRI 1043 / ATCC BAA-672) (Erwinia carotovora subsp. atroseptica).